The following is a 281-amino-acid chain: Tryptophan 2,3-dioxygenase (281 aa).

Substrate is bound by residues 50–54 (FIIQH), Tyr112, and Arg116. A heme-binding site is contributed by His239. Thr253 is a binding site for substrate.

Belongs to the tryptophan 2,3-dioxygenase family. In terms of assembly, homotetramer. Heme serves as cofactor.

It catalyses the reaction L-tryptophan + O2 = N-formyl-L-kynurenine. The protein operates within amino-acid degradation; L-tryptophan degradation via kynurenine pathway; L-kynurenine from L-tryptophan: step 1/2. Heme-dependent dioxygenase that catalyzes the oxidative cleavage of the L-tryptophan (L-Trp) pyrrole ring and converts L-tryptophan to N-formyl-L-kynurenine. Catalyzes the oxidative cleavage of the indole moiety. In Saccharopolyspora erythraea (strain ATCC 11635 / DSM 40517 / JCM 4748 / NBRC 13426 / NCIMB 8594 / NRRL 2338), this protein is Tryptophan 2,3-dioxygenase.